A 470-amino-acid chain; its full sequence is Argininosuccinate lyase (470 aa).

This sequence belongs to the lyase 1 family. Argininosuccinate lyase subfamily.

It localises to the cytoplasm. The catalysed reaction is 2-(N(omega)-L-arginino)succinate = fumarate + L-arginine. It participates in amino-acid biosynthesis; L-arginine biosynthesis; L-arginine from L-ornithine and carbamoyl phosphate: step 3/3. The protein is Argininosuccinate lyase of Mycolicibacterium gilvum (strain PYR-GCK) (Mycobacterium gilvum (strain PYR-GCK)).